An 858-amino-acid chain; its full sequence is Leucine--tRNA ligase (858 aa).

A 'HIGH' region motif is present at residues 43–54 (PYPSGDGLHVGH). The 'KMSKS' region signature appears at 629 to 633 (KMSKS). K632 provides a ligand contact to ATP.

This sequence belongs to the class-I aminoacyl-tRNA synthetase family.

The protein localises to the cytoplasm. The enzyme catalyses tRNA(Leu) + L-leucine + ATP = L-leucyl-tRNA(Leu) + AMP + diphosphate. This Treponema denticola (strain ATCC 35405 / DSM 14222 / CIP 103919 / JCM 8153 / KCTC 15104) protein is Leucine--tRNA ligase.